The following is a 503-amino-acid chain: Apolipoprotein N-acyltransferase (503 aa).

The next 7 helical transmembrane spans lie at 13–32, 34–54, 63–83, 102–122, 124–144, 173–193, and 203–223; these read RWRG…LTAL, MPGF…LYAV, AFLS…WVLP, IVVF…FGFL, YFAP…YTIF, IVSI…NVLF, and LLIF…VHLL. The CN hydrolase domain maps to 231 to 460; sequence FKVVALQPNV…RLAGEFHIKA (230 aa). The active-site Proton acceptor is glutamate 273. Lysine 321 is a catalytic residue. The Nucleophile role is filled by cysteine 371. Residues 468-488 traverse the membrane as a helical segment; sequence VRYGDWFFYLSVILAVVSVFI.

Belongs to the CN hydrolase family. Apolipoprotein N-acyltransferase subfamily.

The protein localises to the cell inner membrane. It carries out the reaction N-terminal S-1,2-diacyl-sn-glyceryl-L-cysteinyl-[lipoprotein] + a glycerophospholipid = N-acyl-S-1,2-diacyl-sn-glyceryl-L-cysteinyl-[lipoprotein] + a 2-acyl-sn-glycero-3-phospholipid + H(+). It participates in protein modification; lipoprotein biosynthesis (N-acyl transfer). Catalyzes the phospholipid dependent N-acylation of the N-terminal cysteine of apolipoprotein, the last step in lipoprotein maturation. The polypeptide is Apolipoprotein N-acyltransferase (Thermotoga maritima (strain ATCC 43589 / DSM 3109 / JCM 10099 / NBRC 100826 / MSB8)).